A 113-amino-acid polypeptide reads, in one-letter code: Cell cycle protein GpsB (113 aa).

The stretch at 36–68 forms a coiled coil; that stretch reads LDMVIKDYSTFTQEIEALQAENIRLVQELDNAP.

The protein belongs to the GpsB family. Forms polymers through the coiled coil domains. Interacts with PBP1, MreC and EzrA.

The protein localises to the cytoplasm. Functionally, divisome component that associates with the complex late in its assembly, after the Z-ring is formed, and is dependent on DivIC and PBP2B for its recruitment to the divisome. Together with EzrA, is a key component of the system that regulates PBP1 localization during cell cycle progression. Its main role could be the removal of PBP1 from the cell pole after pole maturation is completed. Also contributes to the recruitment of PBP1 to the division complex. Not essential for septum formation. The sequence is that of Cell cycle protein GpsB from Listeria welshimeri serovar 6b (strain ATCC 35897 / DSM 20650 / CCUG 15529 / CIP 8149 / NCTC 11857 / SLCC 5334 / V8).